The sequence spans 657 residues: ABC1 family protein YPL109C, mitochondrial (657 aa).

The transit peptide at 1–15 (MSFLKFAYRNSWRYY) directs the protein to the mitochondrion.

This sequence belongs to the protein kinase superfamily. ADCK protein kinase family.

The protein resides in the mitochondrion. This Saccharomyces cerevisiae (strain ATCC 204508 / S288c) (Baker's yeast) protein is ABC1 family protein YPL109C, mitochondrial.